The sequence spans 570 residues: Zinc finger and BTB domain-containing protein 44 (570 aa).

K4 participates in a covalent cross-link: Glycyl lysine isopeptide (Lys-Gly) (interchain with G-Cter in SUMO2). One can recognise a BTB domain in the interval 31–98 (CDITIRVQDK…AYTATLSINT (68 aa)). Phosphoserine is present on residues S135, S159, S161, S165, S191, and S194. Disordered regions lie at residues 194-220 (SPVK…NRNQ) and 243-267 (EKVK…RRMA). Residues 199 to 220 (GTQTSSPQVLNSSASYSENRNQ) are compositionally biased toward polar residues. The residue at position 200 (T200) is a Phosphothreonine. A Glycyl lysine isopeptide (Lys-Gly) (interchain with G-Cter in SUMO2) cross-link involves residue K290. A disordered region spans residues 295–369 (SDEEVHEEVS…NAPPDDDDRL (75 aa)). Low complexity predominate over residues 304 to 318 (SQPVSASQSSLSDQQ). Polar residues predominate over residues 352-361 (TLQSTSSTNA). 4 C2H2-type zinc fingers span residues 399–421 (FQCP…MLIH), 427–449 (FQCD…RLKH), 455–479 (FRCQ…VSRH), and 487–511 (YECK…SLNH).

The protein resides in the nucleus. In terms of biological role, may be involved in transcriptional regulation. The sequence is that of Zinc finger and BTB domain-containing protein 44 (ZBTB44) from Homo sapiens (Human).